The chain runs to 318 residues: NADH-ubiquinone oxidoreductase chain 1 (318 aa).

8 consecutive transmembrane segments (helical) span residues 2 to 22 (FLIN…FLTL), 69 to 89 (FLFT…WAPL), 102 to 122 (LLFI…SGWA), 146 to 166 (MTTI…TAFA), 171 to 191 (HLWL…STLA), 222 to 242 (LFFM…VILF), 253 to 273 (EIST…FLWV), and 294 to 314 (LPLT…LACI).

Belongs to the complex I subunit 1 family.

The protein localises to the mitochondrion inner membrane. The catalysed reaction is a ubiquinone + NADH + 5 H(+)(in) = a ubiquinol + NAD(+) + 4 H(+)(out). Core subunit of the mitochondrial membrane respiratory chain NADH dehydrogenase (Complex I) that is believed to belong to the minimal assembly required for catalysis. Complex I functions in the transfer of electrons from NADH to the respiratory chain. The immediate electron acceptor for the enzyme is believed to be ubiquinone. This chain is NADH-ubiquinone oxidoreductase chain 1 (MT-ND1), found in Mammuthus primigenius (Siberian woolly mammoth).